Consider the following 288-residue polypeptide: UPF0761 membrane protein HS_0693 (288 aa).

6 helical membrane-spanning segments follow: residues 36 to 56 (TLALVPLIMVFFSVFAAFPVF), 92 to 112 (QMSAVGIISLIVVALMLIHSI), 127 to 147 (PAIFSFAIYWLILTLGPIVIA), 176 to 196 (LLSLMPFFLTWFIFTVLYMVV), 200 to 220 (KVSIIHSAAGALIAAVFFTLG), and 240 to 260 (AMATLPIMLLWIQLSWTAVLL).

It belongs to the UPF0761 family.

The protein resides in the cell inner membrane. The polypeptide is UPF0761 membrane protein HS_0693 (Histophilus somni (strain 129Pt) (Haemophilus somnus)).